A 139-amino-acid chain; its full sequence is Putative pre-16S rRNA nuclease (139 aa).

It belongs to the YqgF nuclease family.

The protein resides in the cytoplasm. Could be a nuclease involved in processing of the 5'-end of pre-16S rRNA. This is Putative pre-16S rRNA nuclease from Caldanaerobacter subterraneus subsp. tengcongensis (strain DSM 15242 / JCM 11007 / NBRC 100824 / MB4) (Thermoanaerobacter tengcongensis).